Reading from the N-terminus, the 280-residue chain is UBX domain-containing protein 10 (280 aa).

The interval 41–94 is disordered; it reads SAKGRTRPSLQKSQGVEVCAHHIPSPPPAIPYELPSSQKPGACAPKSPNQGASD. Ser-87 is modified (phosphoserine). Residues 194–271 enclose the UBX domain; sequence DQEPRLLLAV…RIPHKSVLGI (78 aa).

The protein belongs to the UBXN10 family. Interacts with CLUAP1; the interaction is direct and mediates interaction with the intraflagellar transport complex B (IFT-B). Interacts with VCP; the interaction is direct.

The protein resides in the cell projection. The protein localises to the cilium. Its function is as follows. VCP/p97-binding protein required for ciliogenesis. Acts as a tethering factor that facilitates recruitment of VCP/p97 to the intraflagellar transport complex B (IFT-B) in cilia. UBX domain-containing proteins act as tethering factors for VCP/p97 and may specify substrate specificity of VCP/p97. The protein is UBX domain-containing protein 10 of Homo sapiens (Human).